A 340-amino-acid chain; its full sequence is Protein FAM50A-A (340 aa).

Disordered regions lie at residues 1–22 (MAQYKGAASEAGRAMQLMKKRE) and 123–178 (NLEE…EEEN). Over residues 124–146 (LEEDEECEDEEGEEEESDKEDPP) the composition is skewed to acidic residues. Positions 169–178 (PDRDREEEEN) are enriched in basic and acidic residues.

It is found in the nucleus. In terms of biological role, probably involved in the regulation of pre-mRNA splicing. The protein is Protein FAM50A-A (fam50a-a) of Xenopus laevis (African clawed frog).